The chain runs to 177 residues: Phycoerythrin beta subunit (177 aa).

(2R,3E)-phycoerythrobilin contacts are provided by Tyr18, Lys28, Asn35, and Asp39. 15,16-dihydrobiliverdin is bound by residues Cys50, Asp54, and Cys61. Residues Cys82, Arg84, and Asp85 each coordinate (2R,3E)-phycoerythrobilin. Arg129 provides a ligand contact to 15,16-dihydrobiliverdin. A (2R,3E)-phycoerythrobilin-binding site is contributed by Asn144. 2 residues coordinate 15,16-dihydrobiliverdin: Gln148 and Lys149. The (2R,3E)-phycoerythrobilin site is built by Pro154, Gly156, and Cys158.

Belongs to the phycobiliprotein family. In terms of assembly, heterotetramer of 2 different alpha chains and 2 identical beta chains which form 2 alpha-beta heterodimers within the heterotetramer. The two alpha-beta heterodimers are rotated to an open configuration in contrast to the closed configuration found in other cryptophyte species due to the insertion of a single amino acid, 'Asp-65', in a conserved region of the alpha chain. In the open form, the central chromophores are not in physical contact but are separated by a water-filled channel. Contains three phycoerythrobilin chromophores and one 15,16-dihydrobiliverdin chromophore with binding of the phycoerythrobilin chromophores mediated by both the alpha and beta subunits.

It localises to the plastid. The protein resides in the chloroplast thylakoid membrane. Its function is as follows. Light-harvesting photosynthetic bile pigment-protein from the phycobiliprotein complex. This is Phycoerythrin beta subunit from Hemiselmis andersenii (Cryptophyte alga).